The chain runs to 90 residues: MAKGQSLQEPFLNTLRKEKVPVSIYLVNGIKLQGQIESFDQFVVLLRNNVNQMVYKHAISTIVPARRVRLPQQGEEASAESIVGEEESNN.

Positions 9 to 68 constitute a Sm domain; sequence EPFLNTLRKEKVPVSIYLVNGIKLQGQIESFDQFVVLLRNNVNQMVYKHAISTIVPARRV.

Belongs to the Hfq family. In terms of assembly, homohexamer.

Functionally, RNA chaperone that binds small regulatory RNA (sRNAs) and mRNAs to facilitate mRNA translational regulation in response to envelope stress, environmental stress and changes in metabolite concentrations. Also binds with high specificity to tRNAs. The polypeptide is RNA-binding protein Hfq (Halorhodospira halophila (strain DSM 244 / SL1) (Ectothiorhodospira halophila (strain DSM 244 / SL1))).